A 214-amino-acid chain; its full sequence is Protein-L-isoaspartate O-methyltransferase (214 aa).

The active site involves Ser61.

This sequence belongs to the methyltransferase superfamily. L-isoaspartyl/D-aspartyl protein methyltransferase family.

It is found in the cytoplasm. It carries out the reaction [protein]-L-isoaspartate + S-adenosyl-L-methionine = [protein]-L-isoaspartate alpha-methyl ester + S-adenosyl-L-homocysteine. Catalyzes the methyl esterification of L-isoaspartyl residues in peptides and proteins that result from spontaneous decomposition of normal L-aspartyl and L-asparaginyl residues. It plays a role in the repair and/or degradation of damaged proteins. This is Protein-L-isoaspartate O-methyltransferase from Paramagnetospirillum magneticum (strain ATCC 700264 / AMB-1) (Magnetospirillum magneticum).